Reading from the N-terminus, the 692-residue chain is Elongation factor G (692 aa).

The 275-residue stretch at 8–282 folds into the tr-type G domain; it reads ENTRNIGIMA…AVIDYLPSPL (275 aa). GTP is bound by residues 17–24, 81–85, and 135–138; these read AHIDAGKT, DTPGH, and NKMD.

Belongs to the TRAFAC class translation factor GTPase superfamily. Classic translation factor GTPase family. EF-G/EF-2 subfamily.

It is found in the cytoplasm. Its function is as follows. Catalyzes the GTP-dependent ribosomal translocation step during translation elongation. During this step, the ribosome changes from the pre-translocational (PRE) to the post-translocational (POST) state as the newly formed A-site-bound peptidyl-tRNA and P-site-bound deacylated tRNA move to the P and E sites, respectively. Catalyzes the coordinated movement of the two tRNA molecules, the mRNA and conformational changes in the ribosome. This chain is Elongation factor G, found in Bacillus cytotoxicus (strain DSM 22905 / CIP 110041 / 391-98 / NVH 391-98).